The following is a 427-amino-acid chain: 3-phosphoshikimate 1-carboxyvinyltransferase (427 aa).

Positions 20, 21, and 25 each coordinate 3-phosphoshikimate. Lys-20 lines the phosphoenolpyruvate pocket. Phosphoenolpyruvate is bound by residues Gly-92 and Arg-120. Ser-166, Gln-168, Asp-312, and Lys-339 together coordinate 3-phosphoshikimate. Gln-168 serves as a coordination point for phosphoenolpyruvate. The active-site Proton acceptor is Asp-312. The phosphoenolpyruvate site is built by Arg-343 and Arg-385.

The protein belongs to the EPSP synthase family. In terms of assembly, monomer.

The protein localises to the cytoplasm. The catalysed reaction is 3-phosphoshikimate + phosphoenolpyruvate = 5-O-(1-carboxyvinyl)-3-phosphoshikimate + phosphate. Its pathway is metabolic intermediate biosynthesis; chorismate biosynthesis; chorismate from D-erythrose 4-phosphate and phosphoenolpyruvate: step 6/7. Functionally, catalyzes the transfer of the enolpyruvyl moiety of phosphoenolpyruvate (PEP) to the 5-hydroxyl of shikimate-3-phosphate (S3P) to produce enolpyruvyl shikimate-3-phosphate and inorganic phosphate. This is 3-phosphoshikimate 1-carboxyvinyltransferase from Streptococcus thermophilus (strain CNRZ 1066).